Reading from the N-terminus, the 160-residue chain is Serine-protein kinase RsbW (160 aa).

It belongs to the anti-sigma-factor family.

It carries out the reaction L-seryl-[protein] + ATP = O-phospho-L-seryl-[protein] + ADP + H(+). It catalyses the reaction L-threonyl-[protein] + ATP = O-phospho-L-threonyl-[protein] + ADP + H(+). Its function is as follows. Negative regulator of sigma-B activity. Phosphorylates and inactivates its specific antagonist protein, RsbV. Upon phosphorylation of RsbV, RsbW is released and binds to sigma-B, thereby blocking its ability to form an RNA polymerase holoenzyme (E-sigma-B). This Bacillus anthracis (strain A0248) protein is Serine-protein kinase RsbW.